The primary structure comprises 412 residues: MHKLFVARSVKSALFRIKNHQKPQFAAFSTSLLFDDTQKQFKESVAQFAQENIAPHAEKIDRTNYFPQDVNLWKLMGNFNLLGITVPEEYGGLGLGYLYHCIAMEEISRASGSVGLSYGAHTNLCINQLVRNGTHEQKQKYLPKLISGEHVGALAMSEPNAGSDVVSMKCKADRVEGGYVLNGNKMWCTNGPTAQTLVVYAKTDVTAGSKGITAFIIEKGMTGFSTAQKLDKLGMRGSDTCELVFENCFVPEENVLGQVGRGVYVLMSGLDLERLVLASGPVGIMQACLDVVLPYVKQREQFGRPIGEFQFVQGKVADMYTSMQSSRSYLYSVARECDSGTINTKDCAGVILSAAERATQVALQAIQCLGGNGYVNEYPTGRFLRDAKLYEIGAGTSEIRRMIIGRELFKEQ.

The N-terminal 25 residues, 1-25 (MHKLFVARSVKSALFRIKNHQKPQF), are a transit peptide targeting the mitochondrion. FAD is bound by residues 154–163 (LAMSEPNAGS) and 187–189 (WCT). S163 is a binding site for substrate. Substrate-binding positions include 209-210 (SK), Y264, and 271-274 (DLER). E273 serves as the catalytic Proton acceptor. FAD-binding positions include R299, Q310, and 367–371 (QCLGG). 394-395 (AG) lines the substrate pocket. 396–398 (TSE) contributes to the FAD binding site.

This sequence belongs to the acyl-CoA dehydrogenase family. As to quaternary structure, homotetramer. It depends on FAD as a cofactor. As to expression, expressed in flowers and tubers.

The protein resides in the mitochondrion. The enzyme catalyses 3-methylbutanoyl-CoA + oxidized [electron-transfer flavoprotein] + H(+) = 3-methylbut-2-enoyl-CoA + reduced [electron-transfer flavoprotein]. It functions in the pathway amino-acid degradation; L-leucine degradation; (S)-3-hydroxy-3-methylglutaryl-CoA from 3-isovaleryl-CoA: step 1/3. In terms of biological role, involved in the catabolism of amino acids. Uses isovaleryl-CoA as substrate. Minor activity detected with 2-methylpalmitoyl-CoA or 2-methylbutanoyl-CoA, but no activity with short- and medium-straight chain acyl-CoA esters or with 2-methylhexanoyl-CoA. The sequence is that of Isovaleryl-CoA dehydrogenase, mitochondrial (IVD) from Solanum tuberosum (Potato).